A 546-amino-acid chain; its full sequence is Probable protein kinase UbiB (546 aa).

One can recognise a Protein kinase domain in the interval 124 to 502; sequence DFEIKPLASA…HVRQGQSRYF (379 aa). ATP is bound by residues 130–138 and K153; that span reads LASASIAQV. Catalysis depends on D288, which acts as the Proton acceptor. 2 consecutive transmembrane segments (helical) span residues 501–521 and 522–542; these read YFLGIGATLVLSGTFLLVSRP and EWGLMPGWLMAGGLIAWFVGW.

The protein belongs to the ABC1 family. UbiB subfamily.

It localises to the cell inner membrane. Its pathway is cofactor biosynthesis; ubiquinone biosynthesis [regulation]. Is probably a protein kinase regulator of UbiI activity which is involved in aerobic coenzyme Q (ubiquinone) biosynthesis. In Escherichia coli O45:K1 (strain S88 / ExPEC), this protein is Probable protein kinase UbiB.